A 175-amino-acid polypeptide reads, in one-letter code: Chorismate pyruvate-lyase (175 aa).

4 residues coordinate substrate: Met36, Arg78, Leu116, and Glu157.

The protein belongs to the UbiC family. In terms of assembly, monomer.

Its subcellular location is the cytoplasm. The enzyme catalyses chorismate = 4-hydroxybenzoate + pyruvate. The protein operates within cofactor biosynthesis; ubiquinone biosynthesis. Its function is as follows. Removes the pyruvyl group from chorismate, with concomitant aromatization of the ring, to provide 4-hydroxybenzoate (4HB) for the ubiquinone pathway. The chain is Chorismate pyruvate-lyase from Hamiltonella defensa subsp. Acyrthosiphon pisum (strain 5AT).